We begin with the raw amino-acid sequence, 624 residues long: Galactan 5-O-arabinofuranosyltransferase (624 aa).

Helical transmembrane passes span 5-25, 43-63, 73-93, 127-147, 159-179, 181-201, 203-223, 234-254, 280-300, 326-346, 355-375, 391-411, and 422-442; these read VLGQ…VAIA, ALTT…GLLW, LGAL…PLGA, IGLP…IAAA, WSIV…AAMI, FEYA…YAST, PYAA…WAGL, AIVG…LLLV, LAVI…PYLL, FPMF…VWLV, AGAL…SMLT, LTVL…LAIA, and VVAA…QDIP.

Belongs to the glycosyltransferase 85 family.

The protein localises to the cell membrane. It catalyses the reaction Adds an alpha-D-arabinofuranosyl group from trans,octacis-decaprenylphospho-beta-D-arabinofuranose at the 5-O-position of the eighth, tenth and twelfth galactofuranose unit of the galactofuranan chain of [beta-D-galactofuranosyl-(1-&gt;5)-beta-D-galactofuranosyl-(1-&gt;6)]14-beta-D-galactofuranosyl-(1-&gt;5)-beta-D-galactofuranosyl-(1-&gt;4)-alpha-L-rhamnopyranosyl-(1-&gt;3)-N-acetyl-alpha-D-glucosaminyl-diphospho-trans,octacis-decaprenol.. It functions in the pathway cell wall biogenesis; cell wall polysaccharide biosynthesis. Involved in the biosynthesis of the arabinogalactan (AG) region of the mycolylarabinogalactan-peptidoglycan (mAGP) complex, an essential component of the mycobacterial cell wall. Catalyzes the addition of the first key arabinofuranosyl (Araf) residue from the sugar donor decaprenyl-phospho-arabinose (DPA) on the C-5 of a 6-linked galactofuranosyl (Galf) of the galactan domain, thus 'priming' the galactan for further elaboration by other arabinofuranosyltransferases. It is not able to add an Araf residue to a terminal Galf. This Mycolicibacterium smegmatis (strain ATCC 700084 / mc(2)155) (Mycobacterium smegmatis) protein is Galactan 5-O-arabinofuranosyltransferase.